Consider the following 52-residue polypeptide: Large ribosomal subunit protein eL40 (52 aa).

Zn(2+)-binding residues include Cys-20, Cys-23, Cys-34, and Cys-39.

Belongs to the eukaryotic ribosomal protein eL40 family. Component of the large ribosomal subunit. Mature ribosomes consist of a small (40S) and a large (60S) subunit. The 40S subunit contains about 32 different proteins and 1 molecule of RNA (18S). The 60S subunit contains 45 different proteins and 3 molecules of RNA (25S, 5.8S and 5S). The cofactor is Zn(2+).

The protein localises to the cytoplasm. Functionally, component of the ribosome, a large ribonucleoprotein complex responsible for the synthesis of proteins in the cell. The small ribosomal subunit (SSU) binds messenger RNAs (mRNAs) and translates the encoded message by selecting cognate aminoacyl-transfer RNA (tRNA) molecules. The large subunit (LSU) contains the ribosomal catalytic site termed the peptidyl transferase center (PTC), which catalyzes the formation of peptide bonds, thereby polymerizing the amino acids delivered by tRNAs into a polypeptide chain. The nascent polypeptides leave the ribosome through a tunnel in the LSU and interact with protein factors that function in enzymatic processing, targeting, and the membrane insertion of nascent chains at the exit of the ribosomal tunnel. The polypeptide is Large ribosomal subunit protein eL40 (Candida albicans (strain SC5314 / ATCC MYA-2876) (Yeast)).